Consider the following 32-residue polypeptide: SGETEDVTIADIVVGLRIEEELGDAAVYAGAK.

Belongs to the enolase family. In terms of assembly, homodimer. Mg(2+) is required as a cofactor.

Its subcellular location is the cytoplasm. The catalysed reaction is (2R)-2-phosphoglycerate = phosphoenolpyruvate + H2O. The protein operates within carbohydrate degradation; glycolysis; pyruvate from D-glyceraldehyde 3-phosphate: step 4/5. The protein is Enolase of Imperata cylindrica (Cogon grass).